The following is a 148-amino-acid chain: Large ribosomal subunit protein bL9 (148 aa).

It belongs to the bacterial ribosomal protein bL9 family.

Binds to the 23S rRNA. The protein is Large ribosomal subunit protein bL9 of Desulfatibacillum aliphaticivorans.